A 415-amino-acid chain; its full sequence is Lipid-A-disaccharide synthase (415 aa).

The disordered stretch occupies residues 1–21 (MNSLPESGSDGQSSADPSQKA).

It belongs to the LpxB family.

The enzyme catalyses a lipid X + a UDP-2-N,3-O-bis[(3R)-3-hydroxyacyl]-alpha-D-glucosamine = a lipid A disaccharide + UDP + H(+). Its pathway is bacterial outer membrane biogenesis; LPS lipid A biosynthesis. Functionally, condensation of UDP-2,3-diacylglucosamine and 2,3-diacylglucosamine-1-phosphate to form lipid A disaccharide, a precursor of lipid A, a phosphorylated glycolipid that anchors the lipopolysaccharide to the outer membrane of the cell. The polypeptide is Lipid-A-disaccharide synthase (Gluconobacter oxydans (strain 621H) (Gluconobacter suboxydans)).